Here is a 291-residue protein sequence, read N- to C-terminus: 2-C-methyl-D-erythritol 4-phosphate cytidylyltransferase (291 aa).

Positions 1–23 (MTERDFDTPVETPTVQPAPAQGA) are disordered.

The protein belongs to the IspD/TarI cytidylyltransferase family. IspD subfamily.

It catalyses the reaction 2-C-methyl-D-erythritol 4-phosphate + CTP + H(+) = 4-CDP-2-C-methyl-D-erythritol + diphosphate. Its pathway is isoprenoid biosynthesis; isopentenyl diphosphate biosynthesis via DXP pathway; isopentenyl diphosphate from 1-deoxy-D-xylulose 5-phosphate: step 2/6. Functionally, catalyzes the formation of 4-diphosphocytidyl-2-C-methyl-D-erythritol from CTP and 2-C-methyl-D-erythritol 4-phosphate (MEP). The polypeptide is 2-C-methyl-D-erythritol 4-phosphate cytidylyltransferase (Bifidobacterium longum (strain NCC 2705)).